Here is a 666-residue protein sequence, read N- to C-terminus: Fructose-1,6-bisphosphatase class 3 (666 aa).

Belongs to the FBPase class 3 family. The cofactor is Mn(2+).

It carries out the reaction beta-D-fructose 1,6-bisphosphate + H2O = beta-D-fructose 6-phosphate + phosphate. Its pathway is carbohydrate biosynthesis; gluconeogenesis. This is Fructose-1,6-bisphosphatase class 3 from Phocaeicola vulgatus (strain ATCC 8482 / DSM 1447 / JCM 5826 / CCUG 4940 / NBRC 14291 / NCTC 11154) (Bacteroides vulgatus).